Consider the following 185-residue polypeptide: Ribosome-recycling factor (185 aa).

This sequence belongs to the RRF family.

Its subcellular location is the cytoplasm. In terms of biological role, responsible for the release of ribosomes from messenger RNA at the termination of protein biosynthesis. May increase the efficiency of translation by recycling ribosomes from one round of translation to another. In Coxiella burnetii (strain RSA 493 / Nine Mile phase I), this protein is Ribosome-recycling factor.